The primary structure comprises 949 residues: Protein translocase subunit SecA (949 aa).

ATP is bound by residues Gln87, 105–109 (GEGKT), and Asp524. Disordered regions lie at residues 852–876 (PPPG…SSGG) and 896–939 (LEFS…GSGK). Zn(2+) contacts are provided by Cys933, Cys935, Cys944, and His945.

This sequence belongs to the SecA family. As to quaternary structure, monomer and homodimer. Part of the essential Sec protein translocation apparatus which comprises SecA, SecYEG and auxiliary proteins SecDF-YajC and YidC. Zn(2+) is required as a cofactor.

Its subcellular location is the cell inner membrane. The protein localises to the cytoplasm. It catalyses the reaction ATP + H2O + cellular proteinSide 1 = ADP + phosphate + cellular proteinSide 2.. Functionally, part of the Sec protein translocase complex. Interacts with the SecYEG preprotein conducting channel. Has a central role in coupling the hydrolysis of ATP to the transfer of proteins into and across the cell membrane, serving both as a receptor for the preprotein-SecB complex and as an ATP-driven molecular motor driving the stepwise translocation of polypeptide chains across the membrane. This chain is Protein translocase subunit SecA, found in Methylocella silvestris (strain DSM 15510 / CIP 108128 / LMG 27833 / NCIMB 13906 / BL2).